A 119-amino-acid chain; its full sequence is uncharacterized protein (119 aa).

A signal peptide spans 1–26 (MNKLKRLSMLTVMIASVFIFSSHALA). The SH3b domain occupies 30 to 104 (YTVSTSSGAP…IVPGFVSDTY (75 aa)).

To B.subtilis YraJ.

This is an uncharacterized protein from Bacillus subtilis (strain 168).